The following is a 359-amino-acid chain: Nicotinate-nucleotide--dimethylbenzimidazole phosphoribosyltransferase (359 aa).

The Proton acceptor role is filled by glutamate 318.

It belongs to the CobT family. Homodimer.

The enzyme catalyses 5,6-dimethylbenzimidazole + nicotinate beta-D-ribonucleotide = alpha-ribazole 5'-phosphate + nicotinate + H(+). Its pathway is nucleoside biosynthesis; alpha-ribazole biosynthesis; alpha-ribazole from 5,6-dimethylbenzimidazole: step 1/2. Functionally, catalyzes the synthesis of alpha-ribazole-5'-phosphate from nicotinate mononucleotide (NAMN) and 5,6-dimethylbenzimidazole (DMB). In Escherichia coli (strain SMS-3-5 / SECEC), this protein is Nicotinate-nucleotide--dimethylbenzimidazole phosphoribosyltransferase.